The following is a 510-amino-acid chain: Secreted RxLR effector protein 24 (510 aa).

The signal sequence occupies residues 1–18; the sequence is MRGAFYVAIALLGSHTAA. Residues 47-68 carry the RxLR-dEER motif; the sequence is RVLRERRDSKDKLTVHAGAEER.

This sequence belongs to the RxLR effector family.

It localises to the secreted. It is found in the host nucleus. Functionally, secreted effector that acts as an elicitor that induces cell death in host plant cells. In Plasmopara viticola (Downy mildew of grapevine), this protein is Secreted RxLR effector protein 24.